A 570-amino-acid chain; its full sequence is Interleukin-1 receptor accessory protein (570 aa).

An N-terminal signal peptide occupies residues 1–20 (MTLLWCVVSLYFYGILQSDA). Ig-like C2-type domains lie at 21 to 128 (SERC…VAFP), 141 to 230 (PMKL…RTLT), and 242 to 348 (PPVI…AKVK). The Extracellular segment spans residues 21 to 367 (SERCDDWGLD…VELACGFGAT (347 aa)). Disulfide bonds link C24-C122, C47-C114, C137-C181, C160-C212, and C266-C332. An N-linked (GlcNAc...) asparagine glycan is attached at N57. The tract at residues 69–85 (IWYWTRQDRDLEEPINF) is essential for interaction with PTPRD. Residues N107, N111, and N118 are each glycosylated (N-linked (GlcNAc...) asparagine). 3 N-linked (GlcNAc...) asparagine glycosylation sites follow: N196, N209, and N299. The helical transmembrane segment at 368 to 388 (VLLVVILIVVYHVYWLEMVLF) threads the bilayer. At 389–570 (YRAHFGTDET…GLSYSSLKNV (182 aa)) the chain is on the cytoplasmic side. The region spanning 403 to 546 (KEYDIYVSYA…RFWKQLQVAM (144 aa)) is the TIR domain. The active site involves E482. The disordered stretch occupies residues 549-570 (KKSPRRSSSDEQGLSYSSLKNV). Phosphoserine is present on S557. Residues 558 to 570 (DEQGLSYSSLKNV) show a composition bias toward polar residues.

This sequence belongs to the interleukin-1 receptor family. In terms of assembly, the interleukin-36 receptor complex is a heterodimer of IL1RL2 and IL1RAP; the association is inhibited by IL36RN. The interleukin-1 receptor complex is a heterodimer of IL1R1 and IL1RAP. Associates with IL1R2 to form a non-signaling interleukin-1 receptor complex. Isoform 4 interacts with IL1R1 in an interleukin-1-dependent manner. Interacts with IL-33-bound IL1RL1 to form the minimal interleukin-33 signaling complex with a 1:1:1 stoichiometry. Interacts with KIT (independently of stimulation with KITLG/SCF). A mast cell-specific KITLG/SCF-induced interleukin-33 signaling complex contains IL1RL1, IL1RAP, KIT and MYD88. Interacts (via the first immunoglobilin domain) with PTPRD (via the third immunoglobilin domain); induces pre- and postsynaptic differentiation of neurons. In terms of tissue distribution, detected in liver, skin, placenta, thymus and lung. Isoform 4 is predominantly expressed in brain. Overexpressed on candidate chronic myeloid leukemia (CML) stem cells, hematopoietic stem cells and mononuclear cells of patients with acute myeloid leukemia (AML). Overexpressed in patients with chronic obstructive pulmonary disease (COPD). Expressed in T-helper 1 (Th1) and T-helper 2 (Th2) cell subsets.

It localises to the cell membrane. It is found in the secreted. The catalysed reaction is NAD(+) + H2O = ADP-D-ribose + nicotinamide + H(+). Functionally, coreceptor for IL1RL2 in the IL-36 signaling system. Coreceptor with IL1R1 in the IL-1 signaling system. Associates with IL1R1 bound to IL1B to form the high affinity interleukin-1 receptor complex which mediates interleukin-1-dependent activation of NF-kappa-B and other pathways. Signaling involves the recruitment of adapter molecules such as TOLLIP, MYD88, and IRAK1 or IRAK2 via the respective TIR domains of the receptor/coreceptor subunits. Recruits TOLLIP to the signaling complex. Does not bind to interleukin-1 alone; binding of IL1RN to IL1R1, prevents its association with IL1R1 to form a signaling complex. The cellular response is modulated through a non-signaling association with the membrane IL1R2 decoy receptor. Coreceptor for IL1RL1 in the IL-33 signaling system. Can bidirectionally induce pre- and postsynaptic differentiation of neurons by trans-synaptically binding to PTPRD. May play a role in IL1B-mediated costimulation of IFNG production from T-helper 1 (Th1) cells. Its function is as follows. Associates with secreted ligand-bound IL1R2 and increases the affinity of secreted IL1R2 for IL1B; this complex formation may be the dominant mechanism for neutralization of IL1B by secreted/soluble receptors. Enhances the ability of secreted IL1R1 to inhibit IL-33 signaling. Unable to mediate canonical IL-1 signaling. Required for Src phosphorylation by IL1B. May be involved in IL1B-potentiated NMDA-induced calcium influx in neurons. The polypeptide is Interleukin-1 receptor accessory protein (IL1RAP) (Homo sapiens (Human)).